The following is a 649-amino-acid chain: Probable ADP-ribosylation factor GTPase-activating protein AGD14 (649 aa).

The Arf-GAP domain maps to 12–130 (EKIIRGLMKL…KYAGANDADK (119 aa)). The C4-type zinc finger occupies 27–50 (CINCNSLGPQYVCTTFWTFVCMAC). Disordered regions lie at residues 124-159 (GANDADKPSKDSQDHVSSEDMTRRANSYHSYSQSPP), 209-279 (FSNE…VRSV), 294-316 (LGEAVSESRQNTGSQQGKTSNHV), and 366-391 (FTPANSFAGNLGQQPTSRPSELSAPK). Residues 127 to 146 (DADKPSKDSQDHVSSEDMTR) are compositionally biased toward basic and acidic residues. The span at 150 to 159 (SYHSYSQSPP) shows a compositional bias: low complexity. Polar residues-rich tracts occupy residues 248–257 (PQFQHSNAPP), 269–279 (RTTSSGSVRSV), 300–315 (ESRQNTGSQQGKTSNH), and 366–385 (FTPANSFAGNLGQQPTSRPS).

Functionally, GTPase-activating protein (GAP) for ADP ribosylation factor (ARF). This is Probable ADP-ribosylation factor GTPase-activating protein AGD14 (AGD14) from Arabidopsis thaliana (Mouse-ear cress).